We begin with the raw amino-acid sequence, 390 residues long: MIDYTAAGFTLLQGAHLYAPEDRGICDVLVANGKIIAVASNIPSDIVPNCTVVDLSGQILCPGFIDQHVHLIGGGGEAGPTTRTPEVALSRLTEAGVTSVVGLLGTDSISRHPESLLAKTRALNEEGISAWMLTGAYHVPSRTITGSVEKDVAIIDRVIGVKCAISDHRSAAPDVYHLANMAAESRVGGLLGGKPGVTVFHMGDSKKALQPIYDLLENCDVPISKLLPTHVNRNVPLFEQALEFARKGGTIDITSSIDEPVAPAEGIARAVQAGIPLARVTLSSDGNGSQPFFDDEGNLTHIGVAGFETLLETVQVLVKDYDFSISDALRPLTSSVAGFLNLTGKGEILPGNDADLLVMTPELRIEQVYARGKLMVKDGKACVKGTFETA.

Zn(2+) contacts are provided by H68 and H70. Substrate is bound by residues 75-77, T106, and Y137; that span reads GGE. Residue K162 participates in Zn(2+) binding. K162 carries the N6-carboxylysine modification. A substrate-binding site is contributed by R169. Residues H201 and H230 each contribute to the Zn(2+) site. R233 lines the substrate pocket. D285 is a binding site for Zn(2+). Residue D285 is the Proton acceptor of the active site. Residue S289 participates in substrate binding.

This sequence belongs to the peptidase M38 family. The cofactor is Zn(2+). Co(2+) serves as cofactor. Post-translationally, carboxylation allows a single lysine to coordinate two zinc ions.

It localises to the cytoplasm. With respect to regulation, P-hydroxymercuribenzoate causes a slight inhibition (8 to 17 %). Iodoacetamide, o-iodosobenzoate and ammonium persulfate do not inhibit the enzyme activity. Functionally, catalyzes the hydrolytic cleavage of a subset of L-isoaspartyl (L-beta-aspartyl) dipeptides. Used to degrade proteins damaged by L-isoaspartyl residues formation. The best substrate for the enzyme reported thus far is iso-Asp-Leu. The chain is Isoaspartyl dipeptidase (iadA) from Escherichia coli (strain K12).